Reading from the N-terminus, the 489-residue chain is Carboxyl-terminal-processing peptidase 1, chloroplastic (489 aa).

Residues 1 to 20 (MRLLLPFSSPLSATSSPSTP) are compositionally biased toward low complexity. A disordered region spans residues 1–27 (MRLLLPFSSPLSATSSPSTPQFIPELP). The PDZ domain maps to 189 to 273 (FSRMSKYDIT…TFVVLKVKHG (85 aa)). Residues Ser-403 and Lys-428 each act as charge relay system in the active site.

It belongs to the peptidase S41A family.

It localises to the plastid. It is found in the chloroplast thylakoid lumen. The enzyme catalyses The enzyme shows specific recognition of a C-terminal tripeptide, Xaa-Yaa-Zaa, in which Xaa is preferably Ala or Leu, Yaa is preferably Ala or Tyr, and Zaa is preferably Ala, but then cleaves at a variable distance from the C-terminus. A typical cleavage is -Ala-Ala-|-Arg-Ala-Ala-Lys-Glu-Asn-Tyr-Ala-Leu-Ala-Ala.. In terms of biological role, protease involved in the C-terminal processing of the chloroplastic D1 protein of photosystem II. This proteolytic processing is necessary to allow the light-driven assembly of the tetranuclear manganese cluster, which is responsible for photosynthetic water oxidation. The polypeptide is Carboxyl-terminal-processing peptidase 1, chloroplastic (CTPA1) (Arabidopsis thaliana (Mouse-ear cress)).